The sequence spans 1176 residues: Growth-differentiation transition protein 5 (1176 aa).

A signal peptide spans 1–25 (MKNNFFKKTIILLIFLSIFILYSNA). Residues 26–913 (DEETITTPPG…DVPANENTLN (888 aa)) lie on the Extracellular side of the membrane. The helical transmembrane segment at 914-934 (LLTIVLPICSAVVVASSVMLG) threads the bilayer. Topologically, residues 935–1176 (RLFYKKKFKK…NVGYNVHEYF (242 aa)) are cytoplasmic. Composition is skewed to low complexity over residues 965–974 (SNIENKSESI) and 1053–1066 (PQIS…SIPS). 2 disordered regions span residues 965–985 (SNIE…EQKE) and 1050–1080 (VDTP…PPST). The span at 1067–1078 (SSPPPPPLPLPP) shows a compositional bias: pro residues.

It belongs to the GDT family.

The protein resides in the membrane. The polypeptide is Growth-differentiation transition protein 5 (gdt5) (Dictyostelium discoideum (Social amoeba)).